The sequence spans 105 residues: MASRIKKGDQVIVIAGKDKGKQGEIIRIDGHRVVVSNVNIVKRHTKPNPQRGISGGLIDREAPIHVSNIQILNPMTGKGDRVGFKILDDGCKLRIFRSTGEVIGA.

The protein belongs to the universal ribosomal protein uL24 family. As to quaternary structure, part of the 50S ribosomal subunit.

One of two assembly initiator proteins, it binds directly to the 5'-end of the 23S rRNA, where it nucleates assembly of the 50S subunit. Functionally, one of the proteins that surrounds the polypeptide exit tunnel on the outside of the subunit. This chain is Large ribosomal subunit protein uL24, found in Xylella fastidiosa (strain M12).